Here is a 211-residue protein sequence, read N- to C-terminus: Pyridoxine/pyridoxamine 5'-phosphate oxidase (211 aa).

Residues 7 to 10 (RREY) and lysine 65 each bind substrate. FMN-binding positions include 60-65 (RIVLLK), 75-76 (YT), arginine 81, lysine 82, and glutamine 104. 3 residues coordinate substrate: tyrosine 122, arginine 126, and serine 130. Residues 139-140 (QS) and tryptophan 184 contribute to the FMN site. A substrate-binding site is contributed by 190–192 (RLH). Residue arginine 194 coordinates FMN.

Belongs to the pyridoxamine 5'-phosphate oxidase family. In terms of assembly, homodimer. It depends on FMN as a cofactor.

The enzyme catalyses pyridoxamine 5'-phosphate + O2 + H2O = pyridoxal 5'-phosphate + H2O2 + NH4(+). The catalysed reaction is pyridoxine 5'-phosphate + O2 = pyridoxal 5'-phosphate + H2O2. It participates in cofactor metabolism; pyridoxal 5'-phosphate salvage; pyridoxal 5'-phosphate from pyridoxamine 5'-phosphate: step 1/1. Its pathway is cofactor metabolism; pyridoxal 5'-phosphate salvage; pyridoxal 5'-phosphate from pyridoxine 5'-phosphate: step 1/1. Its function is as follows. Catalyzes the oxidation of either pyridoxine 5'-phosphate (PNP) or pyridoxamine 5'-phosphate (PMP) into pyridoxal 5'-phosphate (PLP). This Vibrio campbellii (strain ATCC BAA-1116) protein is Pyridoxine/pyridoxamine 5'-phosphate oxidase.